Here is a 1281-residue protein sequence, read N- to C-terminus: MDGQQLRSSESPASGGGGVTGGGAPHLFHALGPALLISIGYIDLGKWVAAVEAGSRFGLDLVLLALLFNFMAILCQYLAACIGTVTGRSLAEICHQEYSRPTCIFLGVQAGLSLLTSELTMIFGIALGFNLLFEYDDLITGICFATVVPNLLPYAISHLGKKMVGTLNACIAGFALLCYVLGLLVSQPQIPLTTNVIFPKLSGESAYSLMALLGANVMAHNFYIHSSVVQGQKRSAFAVGALFHDHLFSVLFIFTGIFLVNHVLMNSAAADSTNTLLLTFQDVVELMNQIFVNPMAPTIFLVVLLFSSHIISLTSAIGSQVISQHLFGINLPLSGHHLILKAFAIVPALYCAKVAGAEGIYQLLIICQIIQAMLLPSSVVPLFRVASSRLIMGAHRVSLHLEILTFLAFLLMLFSNIIFMAEMLFGDSGWLNTLKGNTGSPVVFPSTVLITVACVSVAFSLYMAVTPLKSGSHEAELQQEWSVPSQKELLNTTQDREETCAGNVTYEEDQRSDVVPSPRIQPVDCLKSALDYIDSSDTAIESDHDSQHSTAHTSTAPESCHSPSFIPEESKSVVAVDWPEPLEPISNAIVAEESTVESVDSKSTGERDIEVEPALLMDNDKEAPNILESDNKPLGGNNPSCASDDGPPSLTFSRGKGSDAGNGSGSLSRLSGLGRAARRQLAAILDEFWGHLFDYHGKLTQEASSKRFDILLGLDVRTPSSTVRADSQANEIPKSPMVRDNLQGSAFLGSSRDLMSTKNEMSNLDLTYGLQMGNNIGSSAWSQGMQLPSTQLQSSSNSLLDQGARLNSNFSTPSYADNNQFYQPATIHGYQLASYLKQMNANRNPYSSMPLDPQRLPKSSASAVPTYVDSVMHARNQNLLASLGATPSQIAATSRIGTMMAERSYYVPSTLDGNENAGSSAYSKKYHSSPDISALIAASRSALLNESKLGGGTIGSQSYLSRLASERSQYTNSVARPAAPLAFDELSPPKLPGDIFSMQQSPNPSARSLWAKQPFEQLFGVSSAELTKSEFNPAGRSGGMTKDDFSYKESEAKLLQSLRFCISKLLKLEGSGWLFKQNGGSDEDLIDQVAAVEKLLQQGTSDNQLLLGDTQQPPCDKADIQYMRVLPNCGDDCIWRASLVVSFGVWCIRRVLDLSLVESRPELWGKYTYVLNRLQGILDPAFSKPRSALSACACLHRDIRVLNSLRHSSLVATNSIPRQIRGSFTTASVVLEMIKDVETAVSGRKGRSGTAAGDVAFPKGKENLASVLKRYKRRLSSKGQQ.

The Cytoplasmic segment spans residues 1 to 21; sequence MDGQQLRSSESPASGGGGVTG. Residues 22 to 42 form a helical membrane-spanning segment; the sequence is GGAPHLFHALGPALLISIGYI. Topologically, residues 43-61 are extracellular; it reads DLGKWVAAVEAGSRFGLDL. A helical membrane pass occupies residues 62 to 82; that stretch reads VLLALLFNFMAILCQYLAACI. Residues 83 to 112 lie on the Cytoplasmic side of the membrane; that stretch reads GTVTGRSLAEICHQEYSRPTCIFLGVQAGL. A helical membrane pass occupies residues 113 to 133; the sequence is SLLTSELTMIFGIALGFNLLF. The Extracellular segment spans residues 134-137; sequence EYDD. The chain crosses the membrane as a helical span at residues 138-158; the sequence is LITGICFATVVPNLLPYAISH. Residues 159-163 lie on the Cytoplasmic side of the membrane; the sequence is LGKKM. A helical membrane pass occupies residues 164–184; it reads VGTLNACIAGFALLCYVLGLL. Residues 185–208 lie on the Extracellular side of the membrane; it reads VSQPQIPLTTNVIFPKLSGESAYS. The chain crosses the membrane as a helical span at residues 209–229; the sequence is LMALLGANVMAHNFYIHSSVV. The Cytoplasmic segment spans residues 230 to 238; that stretch reads QGQKRSAFA. The chain crosses the membrane as a helical span at residues 239 to 259; the sequence is VGALFHDHLFSVLFIFTGIFL. Topologically, residues 260-297 are extracellular; that stretch reads VNHVLMNSAAADSTNTLLLTFQDVVELMNQIFVNPMAP. A helical membrane pass occupies residues 298–318; it reads TIFLVVLLFSSHIISLTSAIG. Residues 319 to 325 are Cytoplasmic-facing; sequence SQVISQH. A helical membrane pass occupies residues 326–346; the sequence is LFGINLPLSGHHLILKAFAIV. At 347–362 the chain is on the extracellular side; the sequence is PALYCAKVAGAEGIYQ. The helical transmembrane segment at 363–383 threads the bilayer; the sequence is LLIICQIIQAMLLPSSVVPLF. The Cytoplasmic portion of the chain corresponds to 384 to 400; that stretch reads RVASSRLIMGAHRVSLH. The helical transmembrane segment at 401–421 threads the bilayer; that stretch reads LEILTFLAFLLMLFSNIIFMA. Topologically, residues 422–447 are extracellular; the sequence is EMLFGDSGWLNTLKGNTGSPVVFPST. A helical membrane pass occupies residues 448–468; that stretch reads VLITVACVSVAFSLYMAVTPL. The Cytoplasmic portion of the chain corresponds to 469-1281; that stretch reads KSGSHEAELQ…KRRLSSKGQQ (813 aa). Disordered regions lie at residues 540 to 565 and 593 to 665; these read IESD…SPSF and ESTV…NGSG. A compositionally biased stretch (polar residues) spans 548 to 557; that stretch reads HSTAHTSTAP. Over residues 599–610 the composition is skewed to basic and acidic residues; it reads VDSKSTGERDIE.

It belongs to the NRAMP (TC 2.A.55) family. As to expression, expressed in roots, leaf sheaths, leaf blades, flowers, developing seeds, germinating seeds and young seedlings. Expressed in adventitious roots, vascular tissues of the seminal roots, lateral roots, the connecting region between vascular tissues and lateral roots, mature leaf, mature stem, tips of adventitious roots derived from the node, shoot apex, young panicle, anthers, pistil, stigma, ovary, seed coat and fruit coat pericarp.

The protein resides in the membrane. In terms of biological role, central factor in ethylene signaling pathways that control development, senescence and grain size. Acts as a positive component of the ethylene-signaling pathway. The polypeptide is Protein ETHYLENE-INSENSITIVE 2 (Oryza sativa subsp. japonica (Rice)).